A 574-amino-acid chain; its full sequence is Ankyrin repeat protein B19 (574 aa).

ANK repeat units follow at residues 56–87 (TGYT…DVTM), 135–164 (IKSR…DPNF), 167–213 (DGYT…NLNA), 217–249 (CGNT…NFEI), 253–285 (HGLT…NVGE), and 327–356 (EGKT…DINA). The region spanning 541–574 (NCLLTLLPSEIIYEILYMLTINDLYNISYPPTKV) is the F-box domain.

Belongs to the poxvirinae B18 protein family.

The sequence is that of Ankyrin repeat protein B19 from Vaccinia virus (strain Western Reserve) (VACV).